The primary structure comprises 218 residues: Small ribosomal subunit protein uS3 (218 aa).

A KH type-2 domain is found at Ile-38–Lys-106.

Belongs to the universal ribosomal protein uS3 family. As to quaternary structure, part of the 30S ribosomal subunit. Forms a tight complex with proteins S10 and S14.

Its function is as follows. Binds the lower part of the 30S subunit head. Binds mRNA in the 70S ribosome, positioning it for translation. This chain is Small ribosomal subunit protein uS3, found in Geobacillus kaustophilus (strain HTA426).